Reading from the N-terminus, the 74-residue chain is Mitochondrial import receptor subunit TOM6 homolog (74 aa).

Low complexity predominate over residues 1–14 (MASSGAGVTAAGSA). A disordered region spans residues 1–24 (MASSGAGVTAAGSANEAPEIPDNV). The residue at position 2 (alanine 2) is an N-acetylalanine.

The protein belongs to the Tom6 family. As to quaternary structure, forms part of the preprotein translocase complex of the outer mitochondrial membrane (TOM complex) which consists of at least 7 different proteins (TOMM5, TOMM6, TOMM7, TOMM20, TOMM22, TOMM40 and TOMM70).

It is found in the mitochondrion outer membrane. The protein is Mitochondrial import receptor subunit TOM6 homolog (TOMM6) of Bos taurus (Bovine).